Here is a 497-residue protein sequence, read N- to C-terminus: Glycerol kinase (497 aa).

Position 11 (Thr11) interacts with ADP. 3 residues coordinate ATP: Thr11, Ser12, and Ser13. Thr11 is a sn-glycerol 3-phosphate binding site. Arg15 serves as a coordination point for ADP. Arg81, Glu82, Tyr133, and Asp242 together coordinate sn-glycerol 3-phosphate. Residues Arg81, Glu82, Tyr133, Asp242, and Gln243 each coordinate glycerol. ADP contacts are provided by Thr264 and Gly307. Residues Thr264, Gly307, Gln311, and Gly412 each coordinate ATP. ADP-binding residues include Gly412 and Asn416.

It belongs to the FGGY kinase family.

It catalyses the reaction glycerol + ATP = sn-glycerol 3-phosphate + ADP + H(+). It functions in the pathway polyol metabolism; glycerol degradation via glycerol kinase pathway; sn-glycerol 3-phosphate from glycerol: step 1/1. With respect to regulation, inhibited by fructose 1,6-bisphosphate (FBP). In terms of biological role, key enzyme in the regulation of glycerol uptake and metabolism. Catalyzes the phosphorylation of glycerol to yield sn-glycerol 3-phosphate. The chain is Glycerol kinase from Polaromonas sp. (strain JS666 / ATCC BAA-500).